Here is a 553-residue protein sequence, read N- to C-terminus: Solute carrier family 45 member 3 (553 aa).

11 helical membrane passes run leucine 19–valine 39, phenylalanine 52–glycine 72, phenylalanine 88–tryptophan 108, leucine 120–phenylalanine 140, phenylalanine 161–isoleucine 181, cysteine 198–threonine 218, phenylalanine 275–phenylalanine 295, methionine 323–aspartate 343, serine 353–histidine 373, alanine 382–leucine 402, and alanine 522–valine 542.

Belongs to the glycoside-pentoside-hexuronide (GPH) cation symporter transporter (TC 2.A.2) family. Expressed in the epididymis. Primarily expressed in the prostate, but also in other tissues.

It localises to the membrane. It carries out the reaction sucrose(out) + H(+)(out) = sucrose(in) + H(+)(in). In terms of biological role, proton-associated sucrose transporter. May be able to transport also glucose and fructose. The chain is Solute carrier family 45 member 3 (Slc45a3) from Mus musculus (Mouse).